The primary structure comprises 545 residues: Probable protein kinase UbiB (545 aa).

Positions 123–501 (DFDIVPLASA…RVRQHQSHYL (379 aa)) constitute a Protein kinase domain. Residues 129 to 137 (LASASIAQV) and K152 each bind ATP. D287 (proton acceptor) is an active-site residue. The next 2 helical transmembrane spans lie at 498 to 518 (SHYL…VVLS) and 521 to 541 (EWDG…LVGW).

Belongs to the ABC1 family. UbiB subfamily.

It localises to the cell inner membrane. It functions in the pathway cofactor biosynthesis; ubiquinone biosynthesis [regulation]. In terms of biological role, is probably a protein kinase regulator of UbiI activity which is involved in aerobic coenzyme Q (ubiquinone) biosynthesis. This chain is Probable protein kinase UbiB, found in Erwinia tasmaniensis (strain DSM 17950 / CFBP 7177 / CIP 109463 / NCPPB 4357 / Et1/99).